A 674-amino-acid polypeptide reads, in one-letter code: Sodium/myo-inositol cotransporter 2 (674 aa).

Topologically, residues 1-25 (MESSASSPPLTQSDPLEAFPRRTLE) are extracellular. A helical transmembrane segment spans residues 26–46 (AGDIAVLVLYFLFVLAVGLWS). Over 47–56 (TVKTKRDTVK) the chain is Cytoplasmic. Residues 57–77 (GYFLAGGNMLWWPVGASLFAS) traverse the membrane as a helical segment. Residues 78-102 (NVGSGHFVGLAGSGAAAGLSVTAYE) lie on the Extracellular side of the membrane. A helical transmembrane segment spans residues 103–123 (LNGLFFVLMLSWIFLPIYITG). At 124 to 140 (QVTTMPEYLRKRFGGNR) the chain is on the cytoplasmic side. The helical transmembrane segment at 141-161 (IPIILAVLYLFIYIFTKISVD) threads the bilayer. The Extracellular portion of the chain corresponds to 162-180 (MYAGAIFIQQSLHVNLYLA). The chain crosses the membrane as a helical span at residues 181–201 (IVGLLAVTALYTIAGGLAAVI). At 202–208 (YTDALQT) the chain is on the cytoplasmic side. The chain crosses the membrane as a helical span at residues 209-229 (LIMLIGALILMGYSFAAVGGL). Topologically, residues 230–272 (EGLEEKYFLAMASNRSGNSSCGLPREDAFHIFRDPVTSDLPWP) are extracellular. Residues 273–293 (GILFGMSIPSLWYWCTDQVIV) form a helical membrane-spanning segment. At 294–308 (QRTLAAKNLSHAKGG) the chain is on the cytoplasmic side. The chain crosses the membrane as a helical span at residues 309–329 (SLMAAYLKVLPLFIMVFPGMV). The Extracellular segment spans residues 330 to 374 (SRVLFPDEVACADPEICRKVCSNPAGCSDIAYPKLVLELLPTGLR). The helical transmembrane segment at 375 to 397 (GLMMAVMVAALTSSLTSIFNSAS) threads the bilayer. The Cytoplasmic segment spans residues 398 to 418 (TIFTMDLWNHLRPRASEKELM). Residues 419–439 (IVGRVFVLLLVLVSILWIPVV) traverse the membrane as a helical segment. Over 440–446 (QASQGGQ) the chain is Extracellular. The helical transmembrane segment at 447–467 (LFIYIQSISSYLQPPVAVVFI) threads the bilayer. The Cytoplasmic segment spans residues 468–479 (MGCFWKRANEKG). The helical transmembrane segment at 480-500 (AFFGLVLGLLLGLVRLILDFI) threads the bilayer. The Extracellular segment spans residues 501–521 (YVQPRCDQLDERPAVVKDVHY). Residues 522–542 (LYFSMILSSVTLITVCAVSWF) form a helical membrane-spanning segment. At 543–653 (TEPPSKEMVS…SLEENPLVKT (111 aa)) the chain is on the cytoplasmic side. Positions 567–589 (EQVPSATPPPLTLSQNGTPEASG) are disordered. The segment covering 578–589 (TLSQNGTPEASG) has biased composition (polar residues). The helical transmembrane segment at 654–674 (LLDLNLIICISCAIFLWGYFA) threads the bilayer.

It belongs to the sodium:solute symporter (SSF) (TC 2.A.21) family.

Its subcellular location is the membrane. It is found in the apical cell membrane. It carries out the reaction myo-inositol(out) + 2 Na(+)(out) = myo-inositol(in) + 2 Na(+)(in). The enzyme catalyses 1D-chiro-inositol(out) + 2 Na(+)(out) = 1D-chiro-inositol(in) + 2 Na(+)(in). The catalysed reaction is D-glucose(out) + 2 Na(+)(out) = D-glucose(in) + 2 Na(+)(in). It catalyses the reaction D-xylose(out) + 2 Na(+)(out) = D-xylose(in) + 2 Na(+)(in). MI transport activity inhibited by D-chiro-inositol (DCI), phlorizin (Pz) and sodium (Na(+)). Insulin increases D-chiro-inositol uptake. Involved in the sodium-dependent cotransport of myo-inositol (MI) with a Na(+):MI stoichiometry of 2:1. Exclusively responsible for apical MI transport and absorption in intestine. Can also transport D-chiro-inositol (DCI) but not L-fucose. Exhibits stereospecific cotransport of both D-glucose and D-xylose. May induce apoptosis through the TNF-alpha, PDCD1 pathway. May play a role in the regulation of MI concentration in serum, involving reabsorption in at least the proximal tubule of the kidney. This Bos taurus (Bovine) protein is Sodium/myo-inositol cotransporter 2.